An 881-amino-acid polypeptide reads, in one-letter code: Valine--tRNA ligase (881 aa).

The short motif at 49–59 (PNVTGKLHLGH) is the 'HIGH' region element. Residues 526–530 (KMSKS) carry the 'KMSKS' region motif. K529 is a binding site for ATP. Residues 810-881 (LADLINLDEE…VRQRLADLEK (72 aa)) adopt a coiled-coil conformation.

The protein belongs to the class-I aminoacyl-tRNA synthetase family. ValS type 1 subfamily. Monomer.

It is found in the cytoplasm. It catalyses the reaction tRNA(Val) + L-valine + ATP = L-valyl-tRNA(Val) + AMP + diphosphate. Catalyzes the attachment of valine to tRNA(Val). As ValRS can inadvertently accommodate and process structurally similar amino acids such as threonine, to avoid such errors, it has a 'posttransfer' editing activity that hydrolyzes mischarged Thr-tRNA(Val) in a tRNA-dependent manner. This Bacillus thuringiensis subsp. konkukian (strain 97-27) protein is Valine--tRNA ligase.